A 517-amino-acid chain; its full sequence is Crotonobetaine/carnitine--CoA ligase (517 aa).

Belongs to the ATP-dependent AMP-binding enzyme family.

It carries out the reaction 4-(trimethylamino)butanoate + ATP + CoA = 4-(trimethylamino)butanoyl-CoA + AMP + diphosphate. The enzyme catalyses crotonobetaine + ATP + CoA = crotonobetainyl-CoA + AMP + diphosphate. It catalyses the reaction (R)-carnitine + ATP + CoA = (R)-carnitinyl-CoA + AMP + diphosphate. It functions in the pathway amine and polyamine metabolism; carnitine metabolism. In terms of biological role, catalyzes the transfer of CoA to carnitine, generating the initial carnitinyl-CoA needed for the CaiB reaction cycle. Also has activity toward crotonobetaine and gamma-butyrobetaine. This is Crotonobetaine/carnitine--CoA ligase from Shigella flexneri.